The following is a 743-amino-acid chain: Homeobox-leucine zipper protein PROTODERMAL FACTOR 2 (743 aa).

Positions 1–72 are disordered; the sequence is MYHPNMFESH…KKRYHRHTQR (72 aa). The segment covering 30–39 has biased composition (basic and acidic residues); that stretch reads SREDDFETKS. Residues 60-71 show a composition bias toward basic residues; sequence PNKKKRYHRHTQ. Positions 62–121 form a DNA-binding region, homeobox; sequence KKKRYHRHTQRQIQELESFFKECPHPDDKQRKELSRDLNLEPLQVKFWFQNKRTQMKAQS. The stretch at 110–192 forms a coiled coil; the sequence is FQNKRTQMKA…DRISAIAAKY (83 aa). Residues 244-476 form the START domain; that stretch reads SETDKPIIVE…LERQCERLAS (233 aa).

This sequence belongs to the HD-ZIP homeobox family. Class IV subfamily. Interacts with GAI/RGA2, RGA/RGA1/GRS, RGL2/SCL19 and ATML1. Binds to AIL7/PLT7, ANT, BBM and AIL1. As to expression, specifically expressed in the layer 1 (L1) of shoot meristems.

The protein localises to the nucleus. Functionally, probable transcription factor that binds to the L1 box DNA sequence 5'-TAAATG[CT]A-3'. Plays a role in maintaining the identity of L1 cells, possibly by interacting with their L1 box or other target-gene promoters; binds to the LIP1 gene promoter and stimulates its expression upon imbibition. Acts as a positive regulator of gibberellins (GAs)-regulated epidermal gene expression (e.g. LIP1, LIP2, LTP1, FDH and PDF1). Functionally redundant to ATML1. Involved, together with HDG proteins (e.g. HDG1, HDG2, HDG5 and HDG12), in the regulation of flower organs development by promoting the expression of APETALA 3 (AP3) in the epidermis and internal cell layers of developing flowers. Seems to promote cell differentiation. In Arabidopsis thaliana (Mouse-ear cress), this protein is Homeobox-leucine zipper protein PROTODERMAL FACTOR 2.